Here is a 399-residue protein sequence, read N- to C-terminus: Enoyl-[acyl-carrier-protein] reductase [NADH] (399 aa).

Residues 48–53, 74–75, 111–112, and 139–140 contribute to the NAD(+) site; these read GASTGY, FE, DA, and LA. Tyrosine 225 lines the substrate pocket. The active-site Proton donor is tyrosine 235. NAD(+)-binding positions include lysine 244 and 274 to 276; that span reads VVT.

It belongs to the TER reductase family. In terms of assembly, monomer.

It carries out the reaction a 2,3-saturated acyl-[ACP] + NAD(+) = a (2E)-enoyl-[ACP] + NADH + H(+). It participates in lipid metabolism; fatty acid biosynthesis. In terms of biological role, involved in the final reduction of the elongation cycle of fatty acid synthesis (FAS II). Catalyzes the reduction of a carbon-carbon double bond in an enoyl moiety that is covalently linked to an acyl carrier protein (ACP). In Yersinia pestis bv. Antiqua (strain Antiqua), this protein is Enoyl-[acyl-carrier-protein] reductase [NADH].